Reading from the N-terminus, the 525-residue chain is Cytochrome P450 4V2 (525 aa).

A helical membrane pass occupies residues Leu-14–Phe-34. 2 residues coordinate heme: Glu-329 and Cys-467.

The protein belongs to the cytochrome P450 family. The cofactor is heme.

The protein resides in the endoplasmic reticulum membrane. It catalyses the reaction dodecanoate + reduced [NADPH--hemoprotein reductase] + O2 = 12-hydroxydodecanoate + oxidized [NADPH--hemoprotein reductase] + H2O + H(+). The catalysed reaction is tetradecanoate + reduced [NADPH--hemoprotein reductase] + O2 = 14-hydroxytetradecanoate + oxidized [NADPH--hemoprotein reductase] + H2O + H(+). It carries out the reaction hexadecanoate + reduced [NADPH--hemoprotein reductase] + O2 = 16-hydroxyhexadecanoate + oxidized [NADPH--hemoprotein reductase] + H2O + H(+). The enzyme catalyses (5Z,8Z,11Z,14Z,17Z)-eicosapentaenoate + reduced [NADPH--hemoprotein reductase] + O2 = 20-hydroxy-(5Z,8Z,11Z,14Z,17Z)-eicosapentaenoate + oxidized [NADPH--hemoprotein reductase] + H2O + H(+). It catalyses the reaction (4Z,7Z,10Z,13Z,16Z,19Z)-docosahexaenoate + reduced [NADPH--hemoprotein reductase] + O2 = 22-hydroxy-(4Z,7Z,10Z,13Z,16Z,19Z)-docosahexaenoate + oxidized [NADPH--hemoprotein reductase] + H2O + H(+). It functions in the pathway lipid metabolism; fatty acid metabolism. Inhibited by N-hydroxy-N'-(4-n-butyl-2-methylphenyl formamidine)(HET0016) with an IC(50) of 38 nM. Functionally, a cytochrome P450 monooxygenase involved in fatty acid metabolism in the eye. Catalyzes the omega-hydroxylation of polyunsaturated fatty acids (PUFAs) docosahexaenoate (DHA) and its precursor eicosapentaenoate (EPA), and may contribute to the homeostasis of these retinal PUFAs. Omega hydroxylates saturated fatty acids such as laurate, myristate and palmitate, the catalytic efficiency decreasing in the following order: myristate &gt; laurate &gt; palmitate (C14&gt;C12&gt;C16). Mechanistically, uses molecular oxygen inserting one oxygen atom into a substrate, and reducing the second into a water molecule, with two electrons provided by NADPH via cytochrome P450 reductase (CPR; NADPH-ferrihemoprotein reductase). This is Cytochrome P450 4V2 (Cyp4v2) from Mus musculus (Mouse).